The chain runs to 386 residues: Bifunctional enzyme IspD/IspF (386 aa).

A 2-C-methyl-D-erythritol 4-phosphate cytidylyltransferase region spans residues 1–226 (MATPSPLPSF…EDFMADLLPV (226 aa)). The 2-C-methyl-D-erythritol 2,4-cyclodiphosphate synthase stretch occupies residues 227–386 (RVGTGFDVHK…ATVVRKDTPA (160 aa)). 2 residues coordinate a divalent metal cation: Asp-233 and His-235. 4-CDP-2-C-methyl-D-erythritol 2-phosphate contacts are provided by residues 233 to 235 (DVH) and 259 to 260 (HS). Position 267 (His-267) interacts with a divalent metal cation. Residues 281–283 (DIG), 357–360 (TTTE), Phe-364, and Arg-367 each bind 4-CDP-2-C-methyl-D-erythritol 2-phosphate.

This sequence in the N-terminal section; belongs to the IspD/TarI cytidylyltransferase family. IspD subfamily. In the C-terminal section; belongs to the IspF family. Requires a divalent metal cation as cofactor.

The enzyme catalyses 2-C-methyl-D-erythritol 4-phosphate + CTP + H(+) = 4-CDP-2-C-methyl-D-erythritol + diphosphate. The catalysed reaction is 4-CDP-2-C-methyl-D-erythritol 2-phosphate = 2-C-methyl-D-erythritol 2,4-cyclic diphosphate + CMP. Its pathway is isoprenoid biosynthesis; isopentenyl diphosphate biosynthesis via DXP pathway; isopentenyl diphosphate from 1-deoxy-D-xylulose 5-phosphate: step 2/6. It functions in the pathway isoprenoid biosynthesis; isopentenyl diphosphate biosynthesis via DXP pathway; isopentenyl diphosphate from 1-deoxy-D-xylulose 5-phosphate: step 4/6. Its function is as follows. Bifunctional enzyme that catalyzes the formation of 4-diphosphocytidyl-2-C-methyl-D-erythritol from CTP and 2-C-methyl-D-erythritol 4-phosphate (MEP) (IspD), and catalyzes the conversion of 4-diphosphocytidyl-2-C-methyl-D-erythritol 2-phosphate (CDP-ME2P) to 2-C-methyl-D-erythritol 2,4-cyclodiphosphate (ME-CPP) with a corresponding release of cytidine 5-monophosphate (CMP) (IspF). This is Bifunctional enzyme IspD/IspF from Erythrobacter litoralis (strain HTCC2594).